Consider the following 198-residue polypeptide: Holliday junction resolvase RecU (198 aa).

Residues 1-21 form a disordered region; sequence MVNYPHKLSSQKRQPSLSQPK. Polar residues predominate over residues 11 to 21; that stretch reads QKRQPSLSQPK. Mg(2+) is bound by residues Thr-81, Asp-83, Glu-96, and Gln-115.

This sequence belongs to the RecU family. It depends on Mg(2+) as a cofactor.

Its subcellular location is the cytoplasm. The enzyme catalyses Endonucleolytic cleavage at a junction such as a reciprocal single-stranded crossover between two homologous DNA duplexes (Holliday junction).. Its function is as follows. Endonuclease that resolves Holliday junction intermediates in genetic recombination. Cleaves mobile four-strand junctions by introducing symmetrical nicks in paired strands. Promotes annealing of linear ssDNA with homologous dsDNA. Required for DNA repair, homologous recombination and chromosome segregation. The chain is Holliday junction resolvase RecU from Streptococcus pneumoniae (strain Taiwan19F-14).